The following is a 277-amino-acid chain: Sulfate transport system permease protein CysT (277 aa).

Transmembrane regions (helical) follow at residues L17–M37, L64–I84, L99–F119, V136–V156, V188–F205, V215–V235, and P243–I263. Positions Y60 to I263 constitute an ABC transmembrane type-1 domain.

The protein belongs to the binding-protein-dependent transport system permease family. CysTW subfamily. In terms of assembly, the complex is composed of two ATP-binding proteins (CysA), two transmembrane proteins (CysT and CysW) and a solute-binding protein (CysP).

The protein resides in the cell inner membrane. Its function is as follows. Part of the ABC transporter complex CysAWTP (TC 3.A.1.6.1) involved in sulfate/thiosulfate import. Probably responsible for the translocation of the substrate across the membrane. The protein is Sulfate transport system permease protein CysT (cysU) of Salmonella typhimurium (strain LT2 / SGSC1412 / ATCC 700720).